The chain runs to 545 residues: Cryptochrome-1 (545 aa).

The Photolyase/cryptochrome alpha/beta domain maps to valine 3–leucine 138. FAD-binding positions include arginine 236, serine 264, serine 266, glutamine 307, histidine 374, aspartate 406–aspartate 408, cysteine 412, and asparagine 415.

Belongs to the DNA photolyase class-1 family. Interacts with tim and per; promoted by light conditions. It depends on FAD as a cofactor.

It is found in the cytoplasm. Its subcellular location is the perinuclear region. The protein resides in the nucleus. In terms of biological role, blue light-dependent regulator that is the input of the circadian feedback loop. Has no photolyase activity for cyclobutane pyrimidine dimers or 6-4 photoproducts. Regulation of expression by light suggests a role in photoreception for locomotor activity rhythms. Functions, together with per, as a transcriptional repressor required for the oscillation of peripheral circadian clocks and for the correct specification of clock cells. Genes directly activated by the transcription factors Clock (Clk) and cycle (cyc) are repressed by cry. The protein is Cryptochrome-1 of Aedes aegypti (Yellowfever mosquito).